A 321-amino-acid chain; its full sequence is Ribonucleoside-diphosphate reductase small subunit (321 aa).

Fe cation-binding residues include Asp78, Glu108, and His111. Residue Tyr115 is part of the active site. Residues 165-185 (ILMILIEGLFFASSFASIAYL) form a helical membrane-spanning segment. Fe cation contacts are provided by Glu171, Glu205, and His208.

This sequence belongs to the ribonucleoside diphosphate reductase small chain family. In terms of assembly, heterotetramer composed of a homodimer of the large subunit (R1) and a homodimer of the small subunit (R2). Larger multisubunit protein complex are also active, composed of (R1)n(R2)n. Requires Fe cation as cofactor.

The protein resides in the host membrane. The catalysed reaction is a 2'-deoxyribonucleoside 5'-diphosphate + [thioredoxin]-disulfide + H2O = a ribonucleoside 5'-diphosphate + [thioredoxin]-dithiol. Functionally, ribonucleoside-diphosphate reductase holoenzyme provides the precursors necessary for viral DNA synthesis. Allows virus growth in non-dividing cells, as well as reactivation from latency in infected hosts. Catalyzes the biosynthesis of deoxyribonucleotides from the corresponding ribonucleotides. The sequence is that of Ribonucleoside-diphosphate reductase small subunit from Equus caballus (Horse).